Reading from the N-terminus, the 333-residue chain is Cytochrome f (333 aa).

Positions 1-44 are cleaved as a signal peptide; it reads MRNACTRARLTRTARAMVKTLFIAIASVTFFFTSDLALPQSAAA. 4 residues coordinate heme: Tyr-45, Cys-66, Cys-69, and His-70. Residues 299–318 traverse the membrane as a helical segment; that stretch reads VGWLIAFVALVMLAQVMLVL.

The protein belongs to the cytochrome f family. In terms of assembly, the 4 large subunits of the cytochrome b6-f complex are cytochrome b6, subunit IV (17 kDa polypeptide, PetD), cytochrome f and the Rieske protein, while the 4 small subunits are PetG, PetL, PetM and PetN. The complex functions as a dimer. It depends on heme as a cofactor.

It localises to the cellular thylakoid membrane. Functionally, component of the cytochrome b6-f complex, which mediates electron transfer between photosystem II (PSII) and photosystem I (PSI), cyclic electron flow around PSI, and state transitions. This Trichormus variabilis (strain ATCC 29413 / PCC 7937) (Anabaena variabilis) protein is Cytochrome f.